The following is a 201-amino-acid chain: Ribosome maturation factor RimP (201 aa).

Belongs to the RimP family.

The protein resides in the cytoplasm. Functionally, required for maturation of 30S ribosomal subunits. The chain is Ribosome maturation factor RimP from Acidobacterium capsulatum (strain ATCC 51196 / DSM 11244 / BCRC 80197 / JCM 7670 / NBRC 15755 / NCIMB 13165 / 161).